The chain runs to 382 residues: ATP phosphoribosyltransferase regulatory subunit (382 aa).

The protein belongs to the class-II aminoacyl-tRNA synthetase family. HisZ subfamily. Heteromultimer composed of HisG and HisZ subunits.

The protein localises to the cytoplasm. Its pathway is amino-acid biosynthesis; L-histidine biosynthesis; L-histidine from 5-phospho-alpha-D-ribose 1-diphosphate: step 1/9. Its function is as follows. Required for the first step of histidine biosynthesis. May allow the feedback regulation of ATP phosphoribosyltransferase activity by histidine. This is ATP phosphoribosyltransferase regulatory subunit from Burkholderia thailandensis (strain ATCC 700388 / DSM 13276 / CCUG 48851 / CIP 106301 / E264).